A 294-amino-acid polypeptide reads, in one-letter code: Peroxidase-like protein 3 (294 aa).

Residue Asn129 is glycosylated (N-linked (GlcNAc...) asparagine).

The protein belongs to the peroxidase family. In terms of tissue distribution, component of the acid-insoluble and acid-soluble organic matrix of calcified layers of the shell (at protein level).

The protein localises to the secreted. In Lottia gigantea (Giant owl limpet), this protein is Peroxidase-like protein 3.